A 255-amino-acid chain; its full sequence is Indole-3-glycerol phosphate synthase (255 aa).

It belongs to the TrpC family.

The catalysed reaction is 1-(2-carboxyphenylamino)-1-deoxy-D-ribulose 5-phosphate + H(+) = (1S,2R)-1-C-(indol-3-yl)glycerol 3-phosphate + CO2 + H2O. Its pathway is amino-acid biosynthesis; L-tryptophan biosynthesis; L-tryptophan from chorismate: step 4/5. This is Indole-3-glycerol phosphate synthase from Streptococcus thermophilus (strain ATCC BAA-491 / LMD-9).